Here is a 438-residue protein sequence, read N- to C-terminus: Na(+)/H(+) antiporter NhaA (438 aa).

The next 11 membrane-spanning stretches (helical) occupy residues 23-43 (FGGI…NSFL), 62-82 (FFIG…LFFL), 104-124 (SFPV…YFFL), 133-153 (GFGI…MLLG), 162-182 (VFLI…IALF), 185-205 (TNLK…LALL), 221-241 (VLLW…AVVL), 302-322 (FLAP…NAGV), 337-357 (FGVI…ITFI), 372-392 (WWHI…SMFI), and 410-430 (IAIL…LFAL).

It belongs to the NhaA Na(+)/H(+) (TC 2.A.33) antiporter family.

It is found in the cell inner membrane. It carries out the reaction Na(+)(in) + 2 H(+)(out) = Na(+)(out) + 2 H(+)(in). Na(+)/H(+) antiporter that extrudes sodium in exchange for external protons. The protein is Na(+)/H(+) antiporter NhaA of Helicobacter pylori (strain P12).